A 441-amino-acid chain; its full sequence is Xaa-Pro dipeptidase (441 aa).

5 residues coordinate Mn(2+): Asp-244, Asp-255, His-336, Glu-381, and Glu-420.

It belongs to the peptidase M24B family. Bacterial-type prolidase subfamily. Requires Mn(2+) as cofactor.

It carries out the reaction Xaa-L-Pro dipeptide + H2O = an L-alpha-amino acid + L-proline. In terms of biological role, splits dipeptides with a prolyl residue in the C-terminal position. This chain is Xaa-Pro dipeptidase, found in Xanthomonas campestris pv. campestris (strain 8004).